A 533-amino-acid polypeptide reads, in one-letter code: GMP synthase [glutamine-hydrolyzing] (533 aa).

In terms of domain architecture, Glutamine amidotransferase type-1 spans 25–215 (SIVIFDFGSQ…VFNICKCHAN (191 aa)). C102 acts as the Nucleophile in catalysis. Active-site residues include H189 and E191. Residues 216–408 (WTMGNYIQES…LGLPDEMIWR (193 aa)) enclose the GMPS ATP-PPase domain. 243–249 (SGGVDSA) contacts ATP.

As to quaternary structure, homodimer.

The catalysed reaction is XMP + L-glutamine + ATP + H2O = GMP + L-glutamate + AMP + diphosphate + 2 H(+). Its pathway is purine metabolism; GMP biosynthesis; GMP from XMP (L-Gln route): step 1/1. Its function is as follows. Catalyzes the synthesis of GMP from XMP. The chain is GMP synthase [glutamine-hydrolyzing] from Dehalococcoides mccartyi (strain ATCC BAA-2266 / KCTC 15142 / 195) (Dehalococcoides ethenogenes (strain 195)).